The primary structure comprises 349 residues: Soluble TNF receptor II (349 aa).

Residues 1 to 19 (MRSVLYSYILFLSCIIING) form the signal peptide. 2 TNFR-Cys repeats span residues 31–65 (KCKDNEYRSRNLCCLSCPPGTYASRLCDSKTNTQC) and 67–108 (PCGS…NRIC). 6 disulfide bridges follow: Cys-32–Cys-43, Cys-44–Cys-57, Cys-47–Cys-65, Cys-68–Cys-83, Cys-86–Cys-100, and Cys-90–Cys-108. N-linked (GlcNAc...) asparagine; by host glycans are attached at residues Asn-101, Asn-190, Asn-249, Asn-277, and Asn-313.

The protein belongs to the orthopoxvirus OPG002 family.

The protein localises to the secreted. Its function is as follows. Inhibits host immune defense by binding to host TNF and various chemokines in the extracellular space. Binds host CC chemokines (beta chemokines) and CXC chemokines (alpha chemokines). This Monkeypox virus protein is Soluble TNF receptor II (OPG002).